The primary structure comprises 1634 residues: Phosphatidylinositol 4-phosphate 3-kinase C2 domain-containing subunit beta (1634 aa).

The tract at residues Ser2–Asn298 is interaction with GRB2. 2 disordered regions span residues Glu45–Asp188 and Gly259–Arg315. A compositionally biased stretch (polar residues) spans Ser87 to Gln112. The segment covering Gly176–Ser187 has biased composition (low complexity). Residues Gly259 to Ser270 show a composition bias toward basic and acidic residues. In terms of domain architecture, PI3K-RBD spans Glu375 to Glu463. The region spanning Val635–Pro786 is the C2 PI3K-type domain. Residues Arg805–Cys981 enclose the PIK helical domain. The PI3K/PI4K catalytic domain maps to Val1050–Ala1328. A G-loop region spans residues Tyr1056–Val1062. The segment at Gly1192–Asn1200 is catalytic loop. The segment at His1211–Thr1237 is activation loop. Residues Gly1365–Glu1481 enclose the PX domain. Positions Val1504 to Phe1624 constitute a C2 domain.

This sequence belongs to the PI3/PI4-kinase family. As to quaternary structure, part of a complex with ERBB2 and EGFR. Part of a complex with phosphorylated EGFR and GRB2. Interacts with phosphorylated EGFR and PDGFR, maybe indirectly. Interacts with GRB2. Ca(2+) serves as cofactor. Mg(2+) is required as a cofactor. It depends on Mn(2+) as a cofactor. Expressed in columnar and transitional epithelia, mononuclear cells, and ganglion cells (at protein level). Widely expressed, with highest levels in thymus and placenta and lowest in peripheral blood, skeletal muscle and kidney.

It localises to the microsome. The protein resides in the cell membrane. The protein localises to the cytoplasm. It is found in the cytosol. Its subcellular location is the nucleus. It localises to the endoplasmic reticulum. It catalyses the reaction a 1,2-diacyl-sn-glycero-3-phospho-(1D-myo-inositol 4-phosphate) + ATP = a 1,2-diacyl-sn-glycero-3-phospho-(1D-myo-inositol-3,4-bisphosphate) + ADP + H(+). The catalysed reaction is a 1,2-diacyl-sn-glycero-3-phospho-(1D-myo-inositol) + ATP = a 1,2-diacyl-sn-glycero-3-phospho-(1D-myo-inositol-3-phosphate) + ADP + H(+). Its activity is regulated as follows. Activated by GRB2. Functionally, phosphorylates PtdIns and PtdIns4P with a preference for PtdIns. Does not phosphorylate PtdIns(4,5)P2. May be involved in EGF and PDGF signaling cascades. In Homo sapiens (Human), this protein is Phosphatidylinositol 4-phosphate 3-kinase C2 domain-containing subunit beta (PIK3C2B).